We begin with the raw amino-acid sequence, 20 residues long: Insulin-like growth factor-binding protein 2 (20 aa).

Positions 2–20 (LVFYCPKCTAERQTACPKL) constitute an IGFBP N-terminal domain.

In terms of assembly, binds IGF2 more than IGF1. Post-translationally, N-glycosylated.

The protein localises to the secreted. Its function is as follows. Inhibits IGF-mediated growth and developmental rates. IGF-binding proteins prolong the half-life of the IGFs and have been shown to either inhibit or stimulate the growth promoting effects of the IGFs on cell culture. They alter the interaction of IGFs with their cell surface receptors. The polypeptide is Insulin-like growth factor-binding protein 2 (igfbp2) (Oncorhynchus tshawytscha (Chinook salmon)).